We begin with the raw amino-acid sequence, 387 residues long: Lactosylceramide alpha-2,3-sialyltransferase (387 aa).

Residues 1–33 lie on the Cytoplasmic side of the membrane; that stretch reads MPNEFTSAKLRSDCSRTSLQWYTQTQHKMRRPS. The helical; Signal-anchor for type II membrane protein transmembrane segment at 34 to 54 threads the bilayer; that stretch reads LLLKDILKCMLVVFGVWLLYI. Topologically, residues 55 to 387 are extracellular; the sequence is LKLNYTAEEC…VVQDLSGGIH (333 aa). 2 N-linked (GlcNAc...) asparagine glycosylation sites follow: Asn58 and Asn208. Cys167 and Cys325 are disulfide-bonded.

This sequence belongs to the glycosyltransferase 29 family.

It localises to the golgi apparatus membrane. The catalysed reaction is a beta-D-Gal-(1-&gt;4)-beta-D-Glc-(1&lt;-&gt;1)-Cer(d18:1(4E)) + CMP-N-acetyl-beta-neuraminate = a ganglioside GM3 (d18:1(4E)) + CMP + H(+). It catalyses the reaction ganglioside GA2 (d18:1(4E)/18:0) + CMP-N-acetyl-beta-neuraminate = ganglioside GM2 (d18:1(4E)/18:0) + CMP + H(+). The enzyme catalyses a beta-D-Gal-(1&lt;-&gt;1')-ceramide + CMP-N-acetyl-beta-neuraminate = N-acetyl-alpha-neuraminosyl-(2-&gt;3)-beta-D-galactosyl-(1&lt;-&gt;1')-ceramide + CMP + H(+). It carries out the reaction ganglioside GA1 (d18:1(4E)/18:0) + CMP-N-acetyl-beta-neuraminate = ganglioside GM1 (d18:1(4E)/18:0) + CMP + H(+). In terms of biological role, transfers the sialyl group (N-acetyl-alpha-neuraminyl or NeuAc) from CMP-NeuAc to the non-reducing terminal galactose (Gal) of glycosphingolipids forming gangliosides (important molecules involved in the regulation of multiple cellular processes, including cell proliferation and differentiation, apoptosis, embryogenesis, development, and oncogenesis). Mainly involved in the biosynthesis of ganglioside GM3 but can also use different glycolipids as substrate acceptors such as D-galactosylceramide (GalCer), asialo-GM2 (GA2) and asialo-GM1 (GA1), although less preferentially than beta-D-Gal-(1-&gt;4)-beta-D-Glc-(1&lt;-&gt;1)-Cer (LacCer). The sequence is that of Lactosylceramide alpha-2,3-sialyltransferase (St3gal5) from Rattus norvegicus (Rat).